The chain runs to 305 residues: Imidazoleglycerol-phosphate dehydratase (305 aa).

This sequence belongs to the imidazoleglycerol-phosphate dehydratase family.

It is found in the cytoplasm. It carries out the reaction D-erythro-1-(imidazol-4-yl)glycerol 3-phosphate = 3-(imidazol-4-yl)-2-oxopropyl phosphate + H2O. It participates in amino-acid biosynthesis; L-histidine biosynthesis; L-histidine from 5-phospho-alpha-D-ribose 1-diphosphate: step 6/9. In Neisseria meningitidis serogroup C (strain 053442), this protein is Imidazoleglycerol-phosphate dehydratase.